A 776-amino-acid chain; its full sequence is DExH-box ATP-dependent RNA helicase DExH18, mitochondrial (776 aa).

The transit peptide at 1-84 (MARGVAGVLR…RSFSSTVDNN (84 aa)) directs the protein to the mitochondrion. Residues 80-101 (TVDNNGENDDIEESVGSESDDY) form a disordered region. The span at 85–101 (GENDDIEESVGSESDDY) shows a compositional bias: acidic residues. The 159-residue stretch at 268 to 426 (FARAMKRKIV…RFKPLVVEAK (159 aa)) folds into the Helicase ATP-binding domain. 281–288 (GPTNSGKT) is an ATP binding site. The DEIH box; degenerate motif lies at 361–364 (DEIQ). The Helicase C-terminal domain occupies 427–595 (TLLGELKNVK…LFAAQVPDMA (169 aa)).

It belongs to the DExH box helicase family. In terms of assembly, homodimer; in free form. Component of the mitochondrial degradosome (mtEXO) complex which is a heteropentamer containing 2 copies of SUPV3L1 and 3 copies of PNPT1. Requires Mg(2+) as cofactor. Mn(2+) is required as a cofactor.

It localises to the nucleus. The protein localises to the mitochondrion matrix. It is found in the mitochondrion nucleoid. The catalysed reaction is ATP + H2O = ADP + phosphate + H(+). Major helicase player in mitochondrial RNA metabolism. Component of the mitochondrial degradosome (mtEXO) complex, that degrades 3' overhang double-stranded RNA with a 3'-to-5' directionality in an ATP-dependent manner. ATPase and ATP-dependent multisubstrate helicase, able to unwind double-stranded (ds) DNA and RNA, and RNA/DNA heteroduplexes in the 5'-to-3' direction. Plays a role in the RNA surveillance system in mitochondria; regulates the stability of mature mRNAs, the removal of aberrantly formed mRNAs and the rapid degradation of non coding processing intermediates. In Arabidopsis thaliana (Mouse-ear cress), this protein is DExH-box ATP-dependent RNA helicase DExH18, mitochondrial.